The chain runs to 326 residues: Thrombopoietin (326 aa).

The first 21 residues, 1–21 (MELTDLLLVAILLLTARLTLS), serve as a signal peptide directing secretion. Intrachain disulfides connect cysteine 28–cysteine 172 and cysteine 50–cysteine 106. N-linked (GlcNAc...) asparagine glycosylation is found at asparagine 197, asparagine 206, asparagine 235, asparagine 249, and asparagine 256. Residues 307–326 (FPPSPTFPTPGSPPQLPPVS) are disordered. Pro residues predominate over residues 308–326 (PPSPTFPTPGSPPQLPPVS).

This sequence belongs to the EPO/TPO family.

The protein localises to the secreted. Lineage-specific cytokine affecting the proliferation and maturation of megakaryocytes from their committed progenitor cells. It acts at a late stage of megakaryocyte development. It may be the major physiological regulator of circulating platelets. The polypeptide is Thrombopoietin (Thpo) (Rattus norvegicus (Rat)).